Reading from the N-terminus, the 320-residue chain is GTPase Era (320 aa).

The 169-residue stretch at 25 to 193 folds into the Era-type G domain; the sequence is HCGFIAIVGR…RKHVRNHLPK (169 aa). Positions 33-40 are G1; that stretch reads GRPNVGKS. Residue 33 to 40 coordinates GTP; the sequence is GRPNVGKS. Positions 59 to 63 are G2; the sequence is QTTRH. The segment at 80–83 is G3; sequence DTPG. GTP is bound by residues 80–84 and 142–145; these read DTPGL and NKVD. The interval 142–145 is G4; it reads NKVD. Positions 172 to 174 are G5; that stretch reads ISA. Residues 216–302 enclose the KH type-2 domain; that stretch reads VREKLMRFTG…YLETWVKVKS (87 aa).

It belongs to the TRAFAC class TrmE-Era-EngA-EngB-Septin-like GTPase superfamily. Era GTPase family. In terms of assembly, monomer.

Its subcellular location is the cytoplasm. It is found in the cell inner membrane. Functionally, an essential GTPase that binds both GDP and GTP, with rapid nucleotide exchange. Plays a role in 16S rRNA processing and 30S ribosomal subunit biogenesis and possibly also in cell cycle regulation and energy metabolism. The polypeptide is GTPase Era (Vibrio parahaemolyticus serotype O3:K6 (strain RIMD 2210633)).